The chain runs to 112 residues: MSVWICLVFASLLSCAGQLCQKQATRPSRRGRRSRHILFWLGMALLCLGCGMLLWLSVLQSIPVSIAYPMLSLNFVWVTLAGWGIWHEPVARRHWLGVGLIVVGIVILGTSV.

The 76-residue stretch at 35–110 folds into the EamA domain; that stretch reads RHILFWLGMA…IVVGIVILGT (76 aa). 3 helical membrane-spanning segments follow: residues 37-57, 66-86, and 89-109; these read ILFW…LWLS, IAYP…WGIW, and PVAR…VILG.

It belongs to the ArnE family. Heterodimer of ArnE and ArnF.

The protein localises to the cell inner membrane. It functions in the pathway bacterial outer membrane biogenesis; lipopolysaccharide biosynthesis. Its function is as follows. Translocates 4-amino-4-deoxy-L-arabinose-phosphoundecaprenol (alpha-L-Ara4N-phosphoundecaprenol) from the cytoplasmic to the periplasmic side of the inner membrane. The sequence is that of Probable 4-amino-4-deoxy-L-arabinose-phosphoundecaprenol flippase subunit ArnE from Klebsiella pneumoniae (strain 342).